A 1196-amino-acid chain; its full sequence is Phosphatidylinositol-3,5-bisphosphate 3-phosphatase MTMR3 (1196 aa).

A Phosphoserine modification is found at Ser-8. The Myotubularin phosphatase domain occupies 155–576 (EHVTSRFKNE…RNLMLWSAVY (422 aa)). Positions 326, 351, and 352 each coordinate a 1,2-diacyl-sn-glycero-3-phospho-(1D-myo-inositol-3,5-bisphosphate). A 1,2-diacyl-sn-glycero-3-phospho-(1D-myo-inositol-3-phosphate) contacts are provided by Asn-326, Asn-351, and Ile-352. Residue Cys-413 is the Phosphocysteine intermediate of the active site. Ser-414, Asp-415, Gly-416, Trp-417, Asp-418, Arg-419, Lys-455, and Arg-459 together coordinate a 1,2-diacyl-sn-glycero-3-phospho-(1D-myo-inositol-3,5-bisphosphate). A 1,2-diacyl-sn-glycero-3-phospho-(1D-myo-inositol-3-phosphate)-binding residues include Ser-414, Asp-415, Gly-416, Trp-417, Asp-418, and Arg-419. Arg-459 serves as a coordination point for a 1,2-diacyl-sn-glycero-3-phospho-(1D-myo-inositol-3-phosphate). The tract at residues 587-612 (DDSCAPYPVPGTSPDEPPLSRLPKTR) is disordered. Pro residues predominate over residues 593 to 603 (YPVPGTSPDEP). A phosphoserine mark is found at Ser-613, Ser-633, Ser-647, and Ser-651. Disordered stretches follow at residues 697-719 (TKEE…EVKE) and 855-900 (ESGP…HRTS). Position 907 is a phosphoserine (Ser-907). A compositionally biased stretch (polar residues) spans 993–1008 (NSHSGRPSTTSSPDQP). The tract at residues 993–1019 (NSHSGRPSTTSSPDQPSRSHLDDDGMP) is disordered. Positions 1027–1060 (QRLRQIESGHQQEVETLKKQVQELKSRLESQYLT) form a coiled coil. A Phosphoserine modification is found at Ser-1062. The segment at 1117–1177 (DHLAAHCYAC…VCKSCYSSLH (61 aa)) adopts an FYVE-type zinc-finger fold. Positions 1123, 1126, 1139, 1142, 1147, 1150, 1169, and 1172 each coordinate Zn(2+).

Belongs to the protein-tyrosine phosphatase family. Non-receptor class myotubularin subfamily. In terms of assembly, forms heterodimers with MTMR4 that recruit both CEP55 and PLK1; occurs during early mitosis, regulates the phosphorylation of CEP55 by PLK1 and its recruitment to the midbody where it mediates cell abscission.

Its subcellular location is the cytoplasm. The protein localises to the cytosol. It is found in the membrane. The catalysed reaction is a 1,2-diacyl-sn-glycero-3-phospho-(1D-myo-inositol-3,5-bisphosphate) + H2O = a 1,2-diacyl-sn-glycero-3-phospho-(1D-myo-inositol-5-phosphate) + phosphate. It carries out the reaction a 1,2-diacyl-sn-glycero-3-phospho-(1D-myo-inositol-3-phosphate) + H2O = a 1,2-diacyl-sn-glycero-3-phospho-(1D-myo-inositol) + phosphate. The enzyme catalyses 1,2-dihexadecanoyl-sn-glycero-3-phospho-(1D-myo-inositol-3-phosphate) + H2O = 1,2-dihexadecanoyl-sn-glycero-3-phospho-(1D-myo-inositol) + phosphate. It catalyses the reaction 1,2-dioctanoyl-sn-glycero-3-phospho-(1-D-myo-inositol-3-phosphate) + H2O = 1,2-dioctanoyl-sn-glycero-3-phospho-(1D-myo-inositol) + phosphate. The catalysed reaction is 1,2-dihexadecanoyl-sn-glycero-3-phospho-(1D-myo-inositol-3,5-phosphate) + H2O = 1,2-dihexadecanoyl-sn-glycero-3-phospho-(1D-myo-inositol-5-phosphate) + phosphate. Its function is as follows. Lipid phosphatase that specifically dephosphorylates the D-3 position of phosphatidylinositol 3-phosphate and phosphatidylinositol 3,5-bisphosphate, generating phosphatidylinositol and phosphatidylinositol 5-phosphate. Decreases the levels of phosphatidylinositol 3-phosphate, a phospholipid found in cell membranes where it acts as key regulator of both cell signaling and intracellular membrane traffic. Could also have a molecular sequestering/adapter activity and regulate biological processes independently of its phosphatase activity. It includes the regulation of midbody abscission during mitotic cytokinesis. In Mus musculus (Mouse), this protein is Phosphatidylinositol-3,5-bisphosphate 3-phosphatase MTMR3.